We begin with the raw amino-acid sequence, 119 residues long: Anther-specific protein BCP1 (119 aa).

The N-terminal stretch at 1–23 (MGRQNVVVVFGLVFLAVLGLAAA) is a signal peptide. The span at 24 to 42 (ASSPSPSASPSKAPSTSTP) shows a compositional bias: low complexity. The interval 24 to 95 (ASSPSPSASP…PSGSADSADS (72 aa)) is disordered. Residues 24–98 (ASSPSPSASP…SADSADSGAA (75 aa)) lie on the Extracellular side of the membrane. Residues 56-69 (TDDDAAASPGDDDV) show a composition bias toward acidic residues. The span at 82–95 (GSNGPSGSADSADS) shows a compositional bias: low complexity. A helical transmembrane segment spans residues 99 to 118 (ALGVSAVVVGVTSIVGSFLF). Residue Phe-119 is a topological domain, cytoplasmic.

In terms of tissue distribution, expressed in mature pollen grains, developing microspores and tapetal cells.

Its subcellular location is the membrane. Its function is as follows. Required for pollen fertility and development. Active in both diploid tapetum and haploid microspores. Major pollen protein. The sequence is that of Anther-specific protein BCP1 (BCP1) from Brassica campestris (Field mustard).